The sequence spans 201 residues: 3-isopropylmalate dehydratase small subunit (201 aa).

Belongs to the LeuD family. LeuD type 1 subfamily. Heterodimer of LeuC and LeuD.

The catalysed reaction is (2R,3S)-3-isopropylmalate = (2S)-2-isopropylmalate. It participates in amino-acid biosynthesis; L-leucine biosynthesis; L-leucine from 3-methyl-2-oxobutanoate: step 2/4. Catalyzes the isomerization between 2-isopropylmalate and 3-isopropylmalate, via the formation of 2-isopropylmaleate. In Shewanella frigidimarina (strain NCIMB 400), this protein is 3-isopropylmalate dehydratase small subunit.